A 689-amino-acid polypeptide reads, in one-letter code: Acyl-coenzyme A oxidase 1 (689 aa).

The FAD site is built by T149 and G188. The active-site Proton acceptor is the E444.

It belongs to the acyl-CoA oxidase family. As to quaternary structure, heteropentamer composed of five different subunits. FAD serves as cofactor.

It localises to the peroxisome. The enzyme catalyses a 2,3-saturated acyl-CoA + O2 = a (2E)-enoyl-CoA + H2O2. The protein operates within lipid metabolism; peroxisomal fatty acid beta-oxidation. The polypeptide is Acyl-coenzyme A oxidase 1 (POX1) (Yarrowia lipolytica (strain CLIB 122 / E 150) (Yeast)).